The sequence spans 31 residues: Bacteriocin leucocin-B (31 aa).

The protein localises to the secreted. Functionally, inhibits a wide spectrum of lactic acid bacteria. The polypeptide is Bacteriocin leucocin-B (Leuconostoc mesenteroides).